The chain runs to 487 residues: Cysteine--tRNA ligase (487 aa).

Position 29 (cysteine 29) interacts with Zn(2+). Positions 31–41 match the 'HIGH' region motif; the sequence is VTVYDFCHIGH. Zn(2+) is bound by residues cysteine 209, histidine 234, and glutamate 238. The short motif at 266-270 is the 'KMSKS' region element; sequence KMSKS. ATP is bound at residue lysine 269.

This sequence belongs to the class-I aminoacyl-tRNA synthetase family. As to quaternary structure, monomer. It depends on Zn(2+) as a cofactor.

It is found in the cytoplasm. The enzyme catalyses tRNA(Cys) + L-cysteine + ATP = L-cysteinyl-tRNA(Cys) + AMP + diphosphate. The polypeptide is Cysteine--tRNA ligase (Trichlorobacter lovleyi (strain ATCC BAA-1151 / DSM 17278 / SZ) (Geobacter lovleyi)).